We begin with the raw amino-acid sequence, 675 residues long: Potassium-transporting ATPase ATP-binding subunit 2 (675 aa).

Helical transmembrane passes span 34–54 (IMFV…FPDI), 65–85 (LITI…SEAF), 216–236 (IALF…IVTL), and 245–265 (LILP…TTIG). The 4-aspartylphosphate intermediate role is filled by D304. ATP contacts are provided by residues D341, E345, 372–379 (FTAETRMS), and K390. Residues D513 and D517 each coordinate Mg(2+). 3 helical membrane-spanning segments follow: residues 569–591 (ALTT…ALMM), 611–631 (AIIS…PIAM), and 644–664 (IFIN…FLGI).

It belongs to the cation transport ATPase (P-type) (TC 3.A.3) family. Type IA subfamily. As to quaternary structure, the system is composed of three essential subunits: KdpA, KdpB and KdpC.

The protein localises to the cell membrane. It catalyses the reaction K(+)(out) + ATP + H2O = K(+)(in) + ADP + phosphate + H(+). In terms of biological role, part of the high-affinity ATP-driven potassium transport (or Kdp) system, which catalyzes the hydrolysis of ATP coupled with the electrogenic transport of potassium into the cytoplasm. This subunit is responsible for energy coupling to the transport system and for the release of the potassium ions to the cytoplasm. This Staphylococcus aureus (strain MRSA252) protein is Potassium-transporting ATPase ATP-binding subunit 2.